The sequence spans 622 residues: Low affinity potassium transport system protein Kup (622 aa).

The next 12 membrane-spanning stretches (helical) occupy residues 9–29 (LPAVTLAAIGVVYGDIGTSPL), 49–69 (VFGFLSLIFWLLVLVVSLKYL), 101–121 (VLVIMGLIGGSFFYGEVVITP), 137–157 (PAMDSYIVPLSIVVLTLLFII), 165–185 (VGKLFAPVMLIWFLTLGVLGV), 212–232 (AVSFFALGAVVLAITGVEALY), 247–267 (WFTVVLPSLVLNYFGQGALLL), 276–296 (PFFLLAPDWALIPLMVLATLA), 337–357 (IYIPAINWMLYIAVVIVIVSF), 363–383 (LAAAYGIAVTGTMVITSILFC), 397–417 (AWVLLVGLLIIDVPMFLANVV), and 419–439 (ILSGGWLPLALGMVMFIIMTT).

This sequence belongs to the HAK/KUP transporter (TC 2.A.72) family.

It is found in the cell inner membrane. It catalyses the reaction K(+)(in) + H(+)(in) = K(+)(out) + H(+)(out). Responsible for the low-affinity transport of potassium into the cell. Likely operates as a K(+):H(+) symporter. The polypeptide is Low affinity potassium transport system protein Kup (Pectobacterium atrosepticum (strain SCRI 1043 / ATCC BAA-672) (Erwinia carotovora subsp. atroseptica)).